Here is a 524-residue protein sequence, read N- to C-terminus: MGGRSSCEDPGCPRSEGRAPRMGCVKSRFLRDGSKASKTEPSANQKGPVYVPDPTSSSKLGPNNSNSMPPGFVEGSEDTIVVALYDYEAIHREDLSFQKGDQMVVLEEAGEWWKARSLATKKEGYIPSNYVARVNSLETEEWFFKGISRKDAERHLLAPGNMLGSFMIRDSETTKGSYSLSVRDFDPQHGDTVKHYKIRTLDSGGFYISPRSTFSSLQELVLHYKKGKDGLCQKLSVPCVSPKPQKPWEKDAWEIPRESLQMEKKLGAGQFGEVWMATYNKHTKVAVKTMKPGSMSVEAFLAEANLMKSLQHDKLVKLHAVVSQEPIFIVTEFMAKGSLLDFLKSEEGSKQPLPKLIDFSAQISEGMAFIEQRNYIHRDLRAANILVSASLVCKIADFGLARIIEDNEYTAREGAKFPIKWTAPEAINFGSFTIKSDVWSFGILLMEIVTYGRIPYPGMSNPEVIRALEHGYRMPRPDNCPEELYNIMIRCWKNRPEERPTFEYIQSVLDDFYTATESQYQQQP.

The segment at 1–72 (MGGRSSCEDP…NNSNSMPPGF (72 aa)) is disordered. Residue Gly-2 is the site of N-myristoyl glycine attachment. Gly-3 carries the S-palmitoyl cysteine lipid modification. A compositionally biased stretch (basic and acidic residues) spans 29–38 (FLRDGSKASK). Phosphotyrosine; by autocatalysis is present on Tyr-50. Polar residues predominate over residues 54-68 (PTSSSKLGPNNSNSM). An SH3 domain is found at 76–136 (SEDTIVVALY…PSNYVARVNS (61 aa)). The region spanning 142-239 (WFFKGISRKD…GLCQKLSVPC (98 aa)) is the SH2 domain. Thr-200 carries the phosphothreonine modification. A Phosphotyrosine modification is found at Tyr-207. Residues 260–513 (LQMEKKLGAG…YIQSVLDDFY (254 aa)) form the Protein kinase domain. Residues 266–274 (LGAGQFGEV) and Lys-288 each bind ATP. Asp-379 acts as the Proton acceptor in catalysis. Phosphotyrosine; by autocatalysis is present on Tyr-409. Ser-460 carries the post-translational modification Phosphoserine. Tyr-520 is modified (phosphotyrosine).

The protein belongs to the protein kinase superfamily. Tyr protein kinase family. SRC subfamily. Interacts with ADAM15. Interacts with FASLG. Interacts with ARRB1 and ARRB2. Interacts with FCGR1A; the interaction may be indirect. Interacts with IL6ST. Interacts (via SH3 domain) with ELMO1. Interacts (via SH3 domain) with TP73. Interacts with YAP1. Interacts with ABL1 and ITGB1, and thereby recruits ABL1 to activated ITGB1. Interacts (via SH2 domain) with FLT3 (tyrosine phosphorylated). Interacts with CBL. Interacts with VAV1, WAS and RAPGEF1. Interacts (via SH3 domain) with WDCP. In terms of processing, phosphorylated on several tyrosine residues. Autophosphorylated. Becomes rapidly phosphorylated upon activation of the immunoglobulin receptors FCGR1A and FCGR2A. Phosphorylation at Tyr-409 increases kinase activity. Phosphorylation at Tyr-520 inhibits kinase activity. Kinase activity is not required for phosphorylation at Tyr-520, suggesting that this site may be a target of other kinases. Ubiquitinated by CBL, leading to its degradation via the proteasome. Post-translationally, isoform 2 palmitoylation at position 2 requires prior myristoylation. Palmitoylation at position 3 is required for caveolar localization of isoform 2. As to expression, expressed predominantly in cells of the myeloid and B-lymphoid lineages.

The protein localises to the cytoplasmic vesicle. The protein resides in the secretory vesicle. It localises to the cytoplasm. It is found in the cytosol. Its subcellular location is the membrane. The protein localises to the caveola. The protein resides in the lysosome. It localises to the cell projection. It is found in the podosome membrane. Its subcellular location is the cell membrane. The protein localises to the cell junction. The protein resides in the focal adhesion. It localises to the cytoskeleton. It is found in the golgi apparatus. Its subcellular location is the nucleus. It carries out the reaction L-tyrosyl-[protein] + ATP = O-phospho-L-tyrosyl-[protein] + ADP + H(+). Its activity is regulated as follows. Subject to autoinhibition, mediated by intramolecular interactions involving the SH2 and SH3 domains. Kinase activity is also regulated by phosphorylation at regulatory tyrosine residues. Phosphorylation at Tyr-409 is required for optimal activity. Phosphorylation at Tyr-520 inhibits kinase activity. Inhibited by PP1. Functionally, non-receptor tyrosine-protein kinase found in hematopoietic cells that transmits signals from cell surface receptors and plays an important role in the regulation of innate immune responses, including neutrophil, monocyte, macrophage and mast cell functions, phagocytosis, cell survival and proliferation, cell adhesion and migration. Acts downstream of receptors that bind the Fc region of immunoglobulins, such as FCGR1A and FCGR2A, but also CSF3R, PLAUR, the receptors for IFNG, IL2, IL6 and IL8, and integrins, such as ITGB1 and ITGB2. During the phagocytic process, mediates mobilization of secretory lysosomes, degranulation, and activation of NADPH oxidase to bring about the respiratory burst. Plays a role in the release of inflammatory molecules. Promotes reorganization of the actin cytoskeleton and actin polymerization, formation of podosomes and cell protrusions. Inhibits TP73-mediated transcription activation and TP73-mediated apoptosis. Phosphorylates CBL in response to activation of immunoglobulin gamma Fc region receptors. Phosphorylates ADAM15, BCR, ELMO1, FCGR2A, GAB1, GAB2, RAPGEF1, STAT5B, TP73, VAV1 and WAS. This Mus musculus (Mouse) protein is Tyrosine-protein kinase HCK (Hck).